Reading from the N-terminus, the 691-residue chain is Threonine--tRNA ligase (691 aa).

The 69-residue stretch at 1-69 (MSTPEITPAA…QQDVEVAAVP (69 aa)) folds into the TGS domain. The tract at residues 268–574 (DHRRLGQELD…LLEHYAGAFP (307 aa)) is catalytic. Residues cysteine 373, histidine 424, and histidine 551 each coordinate Zn(2+).

Belongs to the class-II aminoacyl-tRNA synthetase family. In terms of assembly, homodimer. Zn(2+) is required as a cofactor.

The protein resides in the cytoplasm. The enzyme catalyses tRNA(Thr) + L-threonine + ATP = L-threonyl-tRNA(Thr) + AMP + diphosphate + H(+). Functionally, catalyzes the attachment of threonine to tRNA(Thr) in a two-step reaction: L-threonine is first activated by ATP to form Thr-AMP and then transferred to the acceptor end of tRNA(Thr). Also edits incorrectly charged L-seryl-tRNA(Thr). This is Threonine--tRNA ligase from Corynebacterium jeikeium (strain K411).